Here is a 476-residue protein sequence, read N- to C-terminus: Ovarian-specific serine/threonine-protein kinase Lok (476 aa).

The FHA domain maps to 69–129 (FTAGRGEAND…NGTFVNNEKI (61 aa)). The 268-residue stretch at 174–441 (YYVNRKLGSG…IDDVLQSSWL (268 aa)) folds into the Protein kinase domain. ATP is bound by residues 180–188 (LGSGAYGLV) and K203. The active-site Proton acceptor is the D303.

It belongs to the protein kinase superfamily. CAMK Ser/Thr protein kinase family. CDS1 subfamily. As to expression, in stage 3 embryos, both isoforms are expressed in both somatic and pole cell nuclei. Expression in pole cell nuclei is sustained until stage 9 and weakly expressed after pole cell invagination into the abdominal cavity.

The protein localises to the nucleus speckle. The catalysed reaction is L-seryl-[protein] + ATP = O-phospho-L-seryl-[protein] + ADP + H(+). It carries out the reaction L-threonyl-[protein] + ATP = O-phospho-L-threonyl-[protein] + ADP + H(+). Functionally, may have a role in germline establishment. The sequence is that of Ovarian-specific serine/threonine-protein kinase Lok (lok) from Drosophila melanogaster (Fruit fly).